The primary structure comprises 247 residues: tRNA pseudouridine synthase A (247 aa).

Aspartate 52 acts as the Nucleophile in catalysis. Tyrosine 113 contacts substrate.

The protein belongs to the tRNA pseudouridine synthase TruA family. In terms of assembly, homodimer.

The catalysed reaction is uridine(38/39/40) in tRNA = pseudouridine(38/39/40) in tRNA. In terms of biological role, formation of pseudouridine at positions 38, 39 and 40 in the anticodon stem and loop of transfer RNAs. This Bartonella bacilliformis (strain ATCC 35685 / KC583 / Herrer 020/F12,63) protein is tRNA pseudouridine synthase A.